Consider the following 626-residue polypeptide: Chaperone protein HtpG (626 aa).

An a; substrate-binding region spans residues 1–332; the sequence is MTNNDTPGMR…TEDLPLNVSR (332 aa). Residues 333 to 546 are b; that stretch reads EVVQSSKVMA…KDSLDSSMEK (214 aa). The c stretch occupies residues 547–626; it reads MMKMMHAEMP…ELIEAATMSR (80 aa).

The protein belongs to the heat shock protein 90 family. Homodimer.

Its subcellular location is the cytoplasm. Molecular chaperone. Has ATPase activity. The chain is Chaperone protein HtpG from Chlorobium phaeobacteroides (strain DSM 266 / SMG 266 / 2430).